We begin with the raw amino-acid sequence, 321 residues long: Glyoxylate/hydroxypyruvate reductase B (321 aa).

Catalysis depends on residues Arg237 and Glu266. His285 functions as the Proton donor in the catalytic mechanism.

Belongs to the D-isomer specific 2-hydroxyacid dehydrogenase family. GhrB subfamily. Homodimer.

It is found in the cytoplasm. It catalyses the reaction glycolate + NADP(+) = glyoxylate + NADPH + H(+). It carries out the reaction (R)-glycerate + NAD(+) = 3-hydroxypyruvate + NADH + H(+). The enzyme catalyses (R)-glycerate + NADP(+) = 3-hydroxypyruvate + NADPH + H(+). In terms of biological role, catalyzes the NADPH-dependent reduction of glyoxylate and hydroxypyruvate into glycolate and glycerate, respectively. This Erwinia tasmaniensis (strain DSM 17950 / CFBP 7177 / CIP 109463 / NCPPB 4357 / Et1/99) protein is Glyoxylate/hydroxypyruvate reductase B.